The primary structure comprises 459 residues: tRNA modification GTPase MnmE (459 aa).

3 residues coordinate (6S)-5-formyl-5,6,7,8-tetrahydrofolate: R22, E85, and R124. The TrmE-type G domain occupies 221 to 380 (GLSTVIVGKP…LELQIRDLFF (160 aa)). A K(+)-binding site is contributed by N231. Residues 231 to 236 (NVGKSS), 250 to 256 (TEVAGTT), and 275 to 278 (DTAG) each bind GTP. S235 provides a ligand contact to Mg(2+). Positions 250, 252, and 255 each coordinate K(+). Position 256 (T256) interacts with Mg(2+). K459 is a (6S)-5-formyl-5,6,7,8-tetrahydrofolate binding site.

Belongs to the TRAFAC class TrmE-Era-EngA-EngB-Septin-like GTPase superfamily. TrmE GTPase family. Homodimer. Heterotetramer of two MnmE and two MnmG subunits. Requires K(+) as cofactor.

It is found in the cytoplasm. In terms of biological role, exhibits a very high intrinsic GTPase hydrolysis rate. Involved in the addition of a carboxymethylaminomethyl (cmnm) group at the wobble position (U34) of certain tRNAs, forming tRNA-cmnm(5)s(2)U34. In Staphylococcus haemolyticus (strain JCSC1435), this protein is tRNA modification GTPase MnmE.